A 612-amino-acid polypeptide reads, in one-letter code: Adherence factor (612 aa).

Composition is skewed to low complexity over residues 1-18 (MSSF…NLSS), 47-68 (SSMM…QQQQ), 94-106 (LQTQ…SATT), 115-141 (YNQQ…NNMQ), 182-203 (QSAQ…QPRS), and 218-228 (SRQVSGSGRST). Disordered regions lie at residues 1–20 (MSSF…SSFQ), 46–68 (ASSM…QQQQ), 94–143 (LQTQ…MQFF), 179–273 (PQLQ…NNNK), 443–480 (KEKK…NTNN), 497–527 (SQLM…LSNN), and 546–612 (SQEQ…KQFY). The span at 230-240 (AKKQSAITSGS) shows a compositional bias: polar residues. Residues 254–272 (TSVANSTSTTTMTTTNNNN) show a composition bias toward low complexity. Residues 443-457 (KEKKLTEKTIEQREQ) are compositionally biased toward basic and acidic residues. Composition is skewed to polar residues over residues 465-480 (ANHS…NTNN) and 497-512 (SQLM…ATKI). Residues 555–571 (NQHHHNHQQHPLIHHHQ) are compositionally biased toward basic residues. Low complexity predominate over residues 585 to 606 (PSTIPTSSLSIQQQQQQQQQQL).

Surface antigen mediating adhesion and aggregation in S.cerevisiae. The chain is Adherence factor (ADF1) from Candida albicans (strain SC5314 / ATCC MYA-2876) (Yeast).